A 243-amino-acid polypeptide reads, in one-letter code: Pyridoxine 5'-phosphate synthase (243 aa).

N7 lines the 3-amino-2-oxopropyl phosphate pocket. 9–10 (DH) lines the 1-deoxy-D-xylulose 5-phosphate pocket. Residue R18 participates in 3-amino-2-oxopropyl phosphate binding. Catalysis depends on H43, which acts as the Proton acceptor. Positions 45 and 50 each coordinate 1-deoxy-D-xylulose 5-phosphate. E70 serves as the catalytic Proton acceptor. T100 contributes to the 1-deoxy-D-xylulose 5-phosphate binding site. H191 acts as the Proton donor in catalysis. 3-amino-2-oxopropyl phosphate is bound by residues G192 and 213–214 (GH).

The protein belongs to the PNP synthase family. As to quaternary structure, homooctamer; tetramer of dimers.

The protein resides in the cytoplasm. The catalysed reaction is 3-amino-2-oxopropyl phosphate + 1-deoxy-D-xylulose 5-phosphate = pyridoxine 5'-phosphate + phosphate + 2 H2O + H(+). The protein operates within cofactor biosynthesis; pyridoxine 5'-phosphate biosynthesis; pyridoxine 5'-phosphate from D-erythrose 4-phosphate: step 5/5. In terms of biological role, catalyzes the complicated ring closure reaction between the two acyclic compounds 1-deoxy-D-xylulose-5-phosphate (DXP) and 3-amino-2-oxopropyl phosphate (1-amino-acetone-3-phosphate or AAP) to form pyridoxine 5'-phosphate (PNP) and inorganic phosphate. The polypeptide is Pyridoxine 5'-phosphate synthase (Magnetococcus marinus (strain ATCC BAA-1437 / JCM 17883 / MC-1)).